A 108-amino-acid polypeptide reads, in one-letter code: uncharacterized protein (108 aa).

The protein to M.jannaschii MJ1245 and M.thermoautotrophicum MTH1110.

This is an uncharacterized protein from Methanocaldococcus jannaschii (strain ATCC 43067 / DSM 2661 / JAL-1 / JCM 10045 / NBRC 100440) (Methanococcus jannaschii).